Reading from the N-terminus, the 120-residue chain is Large ribosomal subunit protein bL19 (120 aa).

This sequence belongs to the bacterial ribosomal protein bL19 family.

Functionally, this protein is located at the 30S-50S ribosomal subunit interface and may play a role in the structure and function of the aminoacyl-tRNA binding site. This chain is Large ribosomal subunit protein bL19, found in Gloeothece citriformis (strain PCC 7424) (Cyanothece sp. (strain PCC 7424)).